A 134-amino-acid polypeptide reads, in one-letter code: Large ribosomal subunit protein bL20 (134 aa).

Belongs to the bacterial ribosomal protein bL20 family.

Its function is as follows. Binds directly to 23S ribosomal RNA and is necessary for the in vitro assembly process of the 50S ribosomal subunit. It is not involved in the protein synthesizing functions of that subunit. The polypeptide is Large ribosomal subunit protein bL20 (Rhizobium meliloti (strain 1021) (Ensifer meliloti)).